The sequence spans 163 residues: NADH-quinone oxidoreductase subunit I (163 aa).

2 consecutive 4Fe-4S ferredoxin-type domains span residues 53-83 (LRRY…IEAG) and 94-123 (VRYD…EGPN). C63, C66, C69, C73, C103, C106, C109, and C113 together coordinate [4Fe-4S] cluster.

It belongs to the complex I 23 kDa subunit family. NDH-1 is composed of 14 different subunits. Subunits NuoA, H, J, K, L, M, N constitute the membrane sector of the complex. The cofactor is [4Fe-4S] cluster.

Its subcellular location is the cell inner membrane. It carries out the reaction a quinone + NADH + 5 H(+)(in) = a quinol + NAD(+) + 4 H(+)(out). In terms of biological role, NDH-1 shuttles electrons from NADH, via FMN and iron-sulfur (Fe-S) centers, to quinones in the respiratory chain. The immediate electron acceptor for the enzyme in this species is believed to be ubiquinone. Couples the redox reaction to proton translocation (for every two electrons transferred, four hydrogen ions are translocated across the cytoplasmic membrane), and thus conserves the redox energy in a proton gradient. This chain is NADH-quinone oxidoreductase subunit I, found in Agrobacterium fabrum (strain C58 / ATCC 33970) (Agrobacterium tumefaciens (strain C58)).